A 154-amino-acid polypeptide reads, in one-letter code: Probable transport accessory protein MmpS4 (154 aa).

Helical transmembrane passes span 19–39 (IWIP…VYRV) and 97–117 (QLPW…NLVA).

Belongs to the MmpS family.

The protein resides in the cell membrane. The sequence is that of Probable transport accessory protein MmpS4 from Mycobacterium leprae (strain TN).